A 226-amino-acid polypeptide reads, in one-letter code: CRISPR-associated protein Cas5 (226 aa).

Belongs to the CRISPR-associated protein Cas5 family. Subtype I-A/Apern subfamily. As to quaternary structure, can form a Cascade complex with Csa5, Cas7, Cas3, Cas3' and Cas8a2.

In terms of biological role, CRISPR (clustered regularly interspaced short palindromic repeat) is an adaptive immune system that provides protection against mobile genetic elements (viruses, transposable elements and conjugative plasmids). CRISPR clusters contain spacers, sequences complementary to antecedent mobile elements, and target invading nucleic acids. CRISPR clusters are transcribed and processed into CRISPR RNA (crRNA). This chain is CRISPR-associated protein Cas5 (cas5a), found in Thermoproteus tenax (strain ATCC 35583 / DSM 2078 / JCM 9277 / NBRC 100435 / Kra 1).